The chain runs to 188 residues: CASP-like protein 4B1 (188 aa).

Residues 1–11 (MTNPDKQKPVE) are compositionally biased toward basic and acidic residues. A disordered region spans residues 1 to 34 (MTNPDKQKPVEVTDVETAAEKTSEPTPASGTSTI). Residues 1 to 46 (MTNPDKQKPVEVTDVETAAEKTSEPTPASGTSTITQRWKREDLIKK) are Cytoplasmic-facing. The span at 24–34 (EPTPASGTSTI) shows a compositional bias: polar residues. A helical transmembrane segment spans residues 47 to 67 (ASPITRGICLLFSLLAFLIMV). The Extracellular segment spans residues 68–84 (SNKHGYGRNFNEYEEYR). Residues 85–105 (YVLAISIISTLYTAWQTFAHF) traverse the membrane as a helical segment. The Cytoplasmic portion of the chain corresponds to 106–120 (SKREFFDRRTSTLVD). The helical transmembrane segment at 121–141 (FSGDQIVAYLLISAASSAIPL) threads the bilayer. Residues 142–156 (TNRFREGQDNIFTDS) lie on the Extracellular side of the membrane. Residues 157-177 (AASAISMAIFAFVALALSALF) form a helical membrane-spanning segment. At 178–188 (SGYKLSTHSFI) the chain is on the cytoplasmic side.

The protein belongs to the Casparian strip membrane proteins (CASP) family. As to quaternary structure, homodimer and heterodimers.

The protein localises to the cell membrane. The protein is CASP-like protein 4B1 of Arabidopsis lyrata subsp. lyrata (Lyre-leaved rock-cress).